A 541-amino-acid chain; its full sequence is Phosphatidylethanolamine transferase Mcr-1 (541 aa).

Residues 1 to 14 (MMQHTSVWYRRSVS) are Cytoplasmic-facing. A helical membrane pass occupies residues 15–35 (PFVLVASVAVFLTATANLTFF). The Periplasmic segment spans residues 36–47 (DKISQTYPIADN). Residues 48-68 (LGFVLTIAVVLFGAMLLITTL) traverse the membrane as a helical segment. The Cytoplasmic segment spans residues 69–73 (LSSYR). Residues 74–94 (YVLKPVLILLLIMGAVTSYFT) form a helical membrane-spanning segment. The Periplasmic segment spans residues 95–122 (DTYGTVYDTTMLQNALQTDQAETKDLLN). Residues 123 to 143 (AAFIMRIIGLGVLPSLLVAFV) form a helical membrane-spanning segment. Residues 144 to 157 (KVDYPTWGKGLMRR) are Cytoplasmic-facing. Residues 158-178 (LGLIVASLALILLPVVAFSSH) form a helical membrane-spanning segment. Over 179–541 (YASFFRVHKP…KVKDRTAFIR (363 aa)) the chain is Periplasmic. 2 residues coordinate Zn(2+): Glu246 and Thr285. Disulfide bonds link Cys281/Cys291, Cys356/Cys364, and Cys414/Cys422. The residue at position 285 (Thr285) is a Phosphothreonine. Asp465 and His466 together coordinate Zn(2+).

The protein belongs to the phosphoethanolamine transferase family. Monomer. Phosphorylated at Thr-285; may represent an intermediate in the catalytic mechanism.

It localises to the cell inner membrane. It carries out the reaction lipid A (E. coli) + a 1,2-diacyl-sn-glycero-3-phosphoethanolamine + H(+) = lipid A 4'-(2-aminoethyl diphosphate) (E. coli) + a 1,2-diacyl-sn-glycerol. EDTA may inhibit activity. May be inhibited by ethanolamine. Probably catalyzes the addition of a phosphoethanolamine moiety to lipid A. Phosphoethanolamine modification of lipid A confers polymyxin resistance. Confers resistance to polymyxin-type antibiotics such as colistin; in the E.coli strain W3110. This Escherichia coli protein is Phosphatidylethanolamine transferase Mcr-1 (mcr1).